Here is a 607-residue protein sequence, read N- to C-terminus: Sulfite reductase [NADPH] flavoprotein alpha-component (607 aa).

A Flavodoxin-like domain is found at 66-204; it reads VTILYGSQTG…AAGQWHADVL (139 aa). FMN-binding positions include 72 to 77, 119 to 122, and 155 to 164; these read SQTGNG, STHG, and LGDSSYEFFC. Residues 239–456 form the FAD-binding FR-type domain; the sequence is QNPYRAEVLV…VEPNKHFRLP (218 aa). Residues threonine 327, leucine 361, 395–398, 413–415, and 428–431 contribute to the FAD site; these read RLYS, TVA, and GGAS. Residues 527–528, 533–537, and aspartate 569 contribute to the NADP(+) site; these read SR and KIYVQ. Position 607 (tyrosine 607) interacts with FAD.

The protein belongs to the NADPH-dependent sulphite reductase flavoprotein subunit CysJ family. It in the N-terminal section; belongs to the flavodoxin family. This sequence in the C-terminal section; belongs to the flavoprotein pyridine nucleotide cytochrome reductase family. Alpha(8)-beta(8). The alpha component is a flavoprotein, the beta component is a hemoprotein. FAD is required as a cofactor. It depends on FMN as a cofactor.

The enzyme catalyses hydrogen sulfide + 3 NADP(+) + 3 H2O = sulfite + 3 NADPH + 4 H(+). It functions in the pathway sulfur metabolism; hydrogen sulfide biosynthesis; hydrogen sulfide from sulfite (NADPH route): step 1/1. In terms of biological role, component of the sulfite reductase complex that catalyzes the 6-electron reduction of sulfite to sulfide. This is one of several activities required for the biosynthesis of L-cysteine from sulfate. The flavoprotein component catalyzes the electron flow from NADPH -&gt; FAD -&gt; FMN to the hemoprotein component. The protein is Sulfite reductase [NADPH] flavoprotein alpha-component of Shewanella oneidensis (strain ATCC 700550 / JCM 31522 / CIP 106686 / LMG 19005 / NCIMB 14063 / MR-1).